The sequence spans 478 residues: Cytochrome c-552 (478 aa).

The first 26 residues, 1–26 (MTRIKINARRIFSLLIPFFFFTSVHA), serve as a signal peptide directing secretion. His94 provides a ligand contact to heme c. Cys122, Cys125, and Lys126 together coordinate heme. 6 residues coordinate heme c: Cys160, Cys163, His164, Cys209, Cys212, and His213. Ca(2+) is bound by residues Glu215, Tyr216, Lys261, and Gln263. A substrate-binding site is contributed by Tyr216. Residue His264 coordinates substrate. His275, Cys282, Cys285, His286, His301, Cys314, Cys317, His318, and His393 together coordinate heme c.

Belongs to the cytochrome c-552 family. It depends on Ca(2+) as a cofactor. The cofactor is heme c.

Its subcellular location is the periplasm. The catalysed reaction is 6 Fe(III)-[cytochrome c] + NH4(+) + 2 H2O = 6 Fe(II)-[cytochrome c] + nitrite + 8 H(+). The protein operates within nitrogen metabolism; nitrate reduction (assimilation). Catalyzes the reduction of nitrite to ammonia, consuming six electrons in the process. This chain is Cytochrome c-552, found in Escherichia coli O17:K52:H18 (strain UMN026 / ExPEC).